Reading from the N-terminus, the 290-residue chain is Probable 2-(5''-triphosphoribosyl)-3'-dephosphocoenzyme-A synthase (290 aa).

This sequence belongs to the CitG/MdcB family.

It catalyses the reaction 3'-dephospho-CoA + ATP = 2'-(5''-triphospho-alpha-D-ribosyl)-3'-dephospho-CoA + adenine. Functionally, involved in the formation of 2-(5''-phosphoribosyl)-3'-dephosphocoenzyme-A, the prosthetic group of the acyl-carrier protein of the malonate decarboxylase. The protein is Probable 2-(5''-triphosphoribosyl)-3'-dephosphocoenzyme-A synthase of Stutzerimonas stutzeri (strain A1501) (Pseudomonas stutzeri).